Here is a 127-residue protein sequence, read N- to C-terminus: uncharacterized protein (127 aa).

This is an uncharacterized protein from Saccharomyces cerevisiae (strain ATCC 204508 / S288c) (Baker's yeast).